The primary structure comprises 211 residues: Bacteriorhodopsin (211 aa).

Residues 1 to 19 traverse the membrane as a helical segment; that stretch reads IWLWLGTAGMFLGMLYFIA. Residues 20–33 lie on the Cytoplasmic side of the membrane; the sequence is RGWGETDSRRQKFY. A helical membrane pass occupies residues 34 to 52; the sequence is IATILITAIAFVNYLAMAL. Residues 53 to 68 lie on the Extracellular side of the membrane; the sequence is GFGLTIVEFAGEEHPI. Residues 69-86 form a helical membrane-spanning segment; the sequence is YWARYSDWLFTTPLLLYD. Residues 87–97 lie on the Cytoplasmic side of the membrane; it reads LGLLAGADRNT. Residues 98 to 117 traverse the membrane as a helical segment; it reads ITSLVSLDVLMIGTGLVATL. Residues 118–130 lie on the Extracellular side of the membrane; the sequence is SAGSGVLSAGAER. The chain crosses the membrane as a helical span at residues 131 to 150; that stretch reads LVWWGISTAFLLVLLYFLFS. The Cytoplasmic segment spans residues 151–168; it reads SLSGRVADLPSDTRSTFK. A helical transmembrane segment spans residues 169 to 187; that stretch reads TLRNLVTVVWLVYPVWWLI. Topologically, residues 188 to 199 are extracellular; sequence GTEGIGLVGIGI. A helical membrane pass occupies residues 200–211; it reads ETAGFMVIDLTA.

Belongs to the archaeal/bacterial/fungal opsin family.

The protein resides in the cell membrane. Light-driven proton pump. The chain is Bacteriorhodopsin (bop) from Halobacterium halobium (strain port).